Here is a 208-residue protein sequence, read N- to C-terminus: MIGLVGRKVGMTRVFTEDGVSIPVTVIEIEANRVTQVKTLENDGYTAVQVTTGSKKASRVTKPEAGHFVKAGVEAGRGLWEFRTEGEEFTLGQEINVDIFADVKKVDVTGTSKGKGFQGGVKRWNFRTQDATHGNSLSHRVLGSIGQNQTPGRVFKGKKMAGHLGAERVTVQSLEVVRVDAERKLLLVKGAVPGATNSDVIVKPAVKA.

Residue Gln-149 is modified to N5-methylglutamine.

This sequence belongs to the universal ribosomal protein uL3 family. Part of the 50S ribosomal subunit. Forms a cluster with proteins L14 and L19. Post-translationally, methylated by PrmB.

In terms of biological role, one of the primary rRNA binding proteins, it binds directly near the 3'-end of the 23S rRNA, where it nucleates assembly of the 50S subunit. This is Large ribosomal subunit protein uL3 from Actinobacillus succinogenes (strain ATCC 55618 / DSM 22257 / CCUG 43843 / 130Z).